The primary structure comprises 318 residues: NADH-ubiquinone oxidoreductase chain 1 (318 aa).

Transmembrane regions (helical) follow at residues F2–L22, Y71–I91, I98–W118, L146–I166, H171–A191, L222–F242, E253–V273, and L294–I314.

Belongs to the complex I subunit 1 family.

Its subcellular location is the mitochondrion inner membrane. It catalyses the reaction a ubiquinone + NADH + 5 H(+)(in) = a ubiquinol + NAD(+) + 4 H(+)(out). Core subunit of the mitochondrial membrane respiratory chain NADH dehydrogenase (Complex I) that is believed to belong to the minimal assembly required for catalysis. Complex I functions in the transfer of electrons from NADH to the respiratory chain. The immediate electron acceptor for the enzyme is believed to be ubiquinone. This chain is NADH-ubiquinone oxidoreductase chain 1 (MT-ND1), found in Nycticebus coucang (Slow loris).